We begin with the raw amino-acid sequence, 205 residues long: FMN-dependent NADH:quinone oxidoreductase (205 aa).

FMN is bound by residues Ser-10, 16–18, and 96–99; these read SHS and MYNF.

This sequence belongs to the azoreductase type 1 family. Homodimer. It depends on FMN as a cofactor.

The catalysed reaction is 2 a quinone + NADH + H(+) = 2 a 1,4-benzosemiquinone + NAD(+). It catalyses the reaction N,N-dimethyl-1,4-phenylenediamine + anthranilate + 2 NAD(+) = 2-(4-dimethylaminophenyl)diazenylbenzoate + 2 NADH + 2 H(+). Quinone reductase that provides resistance to thiol-specific stress caused by electrophilic quinones. Functionally, also exhibits azoreductase activity. Catalyzes the reductive cleavage of the azo bond in aromatic azo compounds to the corresponding amines. This Nostoc punctiforme (strain ATCC 29133 / PCC 73102) protein is FMN-dependent NADH:quinone oxidoreductase.